The chain runs to 1104 residues: Partner and localizer of BRCA2 (1104 aa).

Positions 1–157 (MEELSGKPLS…WEKSSVSQEK (157 aa)) are required for its oligomerization and is important for its focal concentration at DNA damage sites. The segment at 1 to 195 (MEELSGKPLS…TPVSEKTHLL (195 aa)) is interaction with RAD51. Positions 1–308 (MEELSGKPLS…RAHGQLPGSP (308 aa)) are interaction with BRCA1. A coiled-coil region spans residues 9-48 (LSYAEKEKLKEKLAFLKKEYSRTLARLQRAKRAEKAKNSK). Residues 39–52 (KRAEKAKNSKKAIE) are compositionally biased toward basic and acidic residues. 3 disordered regions span residues 39–91 (KRAE…TGEN), 122–157 (GQLLHSTSSPDGKKEQNTLPGTTKTPWEKSSVSQEK), and 243–272 (PSCTASNSNHSQHLEHTPPKSGCKITTQGP). Composition is skewed to polar residues over residues 59–70 (EASSQLSHSESI) and 138–154 (NTLPGTTKTPWEKSSVS). Residue Ser274 is modified to Phosphoserine. The tract at residues 304 to 354 (LPGSPNSCSVNDLTHSNLPANSTPNSKSLKSPSNTVDERNEPLQEDEILGP) is disordered. Positions 306–338 (GSPNSCSVNDLTHSNLPANSTPNSKSLKSPSNT) are enriched in polar residues. A Phosphoserine modification is found at Ser364. Positions 374 to 424 (SCTMLEGLLFPAEYYVRTTRRMSDCQRKIALEAVIQSHLGVKKKELKKKTK) are chAM (Chromatin-association motif); required for chromatin association, mediates nucleosome association. Disordered regions lie at residues 417–494 (KELK…SART) and 581–730 (LQRD…TPLP). Position 432 is a phosphoserine (Ser432). Residues 446 to 462 (TSTGQSSSGSLSQKLLS) show a composition bias toward low complexity. Residues 483–492 (RGHRGKRKSA) show a composition bias toward basic residues. Positions 664–713 (TLSTEAAQPCSTSQPPLLGDTNSLVNNSKQCNSSACSPKPDTNLQASGRQ) are enriched in polar residues. Positions 693–1104 (QCNSSACSPK…DGNIFIYRYF (412 aa)) are required for interaction with POLH and POLH DNA synthesis stimulation. The interaction with RAD51 and BRCA2 stretch occupies residues 771–1104 (GNLQLVSELK…DGNIFIYRYF (334 aa)). The interval 771 to 1104 (GNLQLVSELK…DGNIFIYRYF (334 aa)) is interaction with RAD51, BRCA2 and POLH. WD repeat units lie at residues 772 to 833 (NLQL…WHFT), 835 to 879 (VPVL…QVLL), 880 to 927 (KSGD…LMPP), 928 to 970 (DETV…MHID), 976 to 1027 (SVCH…LLCS), 1033 to 1071 (AGRFLEGDVKDHVAAAVLTSGTIAIWDLLLGHCTALLPP), and 1073 to 1104 (SDQSWSLVKWSGTDSHLLAGQKDGNIFIYRYF).

As to quaternary structure, homooligomer; dissociated upon DNA damage thus allowing association with BRCA1. Oligomerization is essential for its focal accumulation at DNA breaks. Part of a BRCA complex containing BRCA1, BRCA2 and PALB2. Interacts with BRCA1 and this interaction is essential for its function in HRR. Interacts with RAD51AP1 and MORF4L1/MRG15. Component of the homologous recombination repair (HR) complex composed of ERCC5/XPG, BRCA2, PALB2, DSS1 and RAD51. Within the complex, interacts with ERCC5/XPG and BRCA2. Interacts with BRCA2, RAD51C, RAD51 and XRCC3; the interactions are direct and it may serve as a scaffold for a HR complex containing PALB2, BRCA2, RAD51C, RAD51 and XRCC3. Interacts with POLH; the interaction is direct.

The protein localises to the nucleus. Plays a critical role in homologous recombination repair (HRR) through its ability to recruit BRCA2 and RAD51 to DNA breaks. Strongly stimulates the DNA strand-invasion activity of RAD51, stabilizes the nucleoprotein filament against a disruptive BRC3-BRC4 polypeptide and helps RAD51 to overcome the suppressive effect of replication protein A (RPA). Functionally cooperates with RAD51AP1 in promoting of D-loop formation by RAD51. Serves as the molecular scaffold in the formation of the BRCA1-PALB2-BRCA2 complex which is essential for homologous recombination. Via its WD repeats is proposed to scaffold a HR complex containing RAD51C and BRCA2 which is thought to play a role in HR-mediated DNA repair. Essential partner of BRCA2 that promotes the localization and stability of BRCA2. Also enables its recombinational repair and checkpoint functions of BRCA2. May act by promoting stable association of BRCA2 with nuclear structures, allowing BRCA2 to escape the effects of proteasome-mediated degradation. Binds DNA with high affinity for D loop, which comprises single-stranded, double-stranded and branched DNA structures. May play a role in the extension step after strand invasion at replication-dependent DNA double-strand breaks; together with BRCA2 is involved in both POLH localization at collapsed replication forks and DNA polymerization activity. The polypeptide is Partner and localizer of BRCA2 (Palb2) (Mus musculus (Mouse)).